Reading from the N-terminus, the 237-residue chain is Lysophospholipase-like protein 1 (237 aa).

N-acetylalanine is present on Ala-2. Residues Ser-124, Asp-179, and His-211 each act as charge relay system in the active site.

This sequence belongs to the AB hydrolase superfamily. AB hydrolase 2 family.

It is found in the cytoplasm. It localises to the cytosol. It catalyses the reaction S-hexadecanoyl-L-cysteinyl-[protein] + H2O = L-cysteinyl-[protein] + hexadecanoate + H(+). Its function is as follows. Palmitoyl thioesterase that catalyzes depalmitoylation of CGAS and KCNMA1. Acts as a regulator of innate immunity by mediating depalmitoylation of CGAS, thereby preventing CGAS homodimerization and cyclic GMP-AMP synthase activity. Does not exhibit phospholipase nor triacylglycerol lipase activity, able to hydrolyze only short chain substrates due to its shallow active site. The protein is Lysophospholipase-like protein 1 of Pongo abelii (Sumatran orangutan).